A 67-amino-acid chain; its full sequence is Small ribosomal subunit protein bS21 (67 aa).

The protein belongs to the bacterial ribosomal protein bS21 family.

This Aquifex aeolicus (strain VF5) protein is Small ribosomal subunit protein bS21 (rpsU).